Consider the following 174-residue polypeptide: Gamma-crystallin D (174 aa).

Beta/gamma crystallin 'Greek key' domains follow at residues 2-40 and 41-83; these read GKIT…RVDS and GCWM…RLIP. The tract at residues 84 to 87 is connecting peptide; the sequence is HAGS. Beta/gamma crystallin 'Greek key' domains lie at 88–128 and 129–171; these read HRLR…NVLE and GSWV…RRVI.

The protein belongs to the beta/gamma-crystallin family.

Crystallins are the dominant structural components of the vertebrate eye lens. The polypeptide is Gamma-crystallin D (CRYGD) (Bos taurus (Bovine)).